The following is a 255-amino-acid chain: MHTPRKRFGQNFLIDDGIVHAIVNAIHPQAGETVVEIGPGLGALTRPLLERLPHLHAVELDRDIIARLRRAWPPERLTLHAGDALKFDFGSLGDDLRIVGNLPYNISTPLLFHLLEFAPRIRDMHFMLQKEVVERMVASPATADYGRLSIMLQRRFHMEWLLDVPPTAFDPPPKVESAVVRLIPKSTAEVPSVDEALFARVVAAAFAQRRKTLRNTLSALMRPEDFVALGIDPGLRAEALHVADYEAITAYLATR.

Positions 11, 13, 38, 59, 83, and 101 each coordinate S-adenosyl-L-methionine.

The protein belongs to the class I-like SAM-binding methyltransferase superfamily. rRNA adenine N(6)-methyltransferase family. RsmA subfamily.

The protein localises to the cytoplasm. It carries out the reaction adenosine(1518)/adenosine(1519) in 16S rRNA + 4 S-adenosyl-L-methionine = N(6)-dimethyladenosine(1518)/N(6)-dimethyladenosine(1519) in 16S rRNA + 4 S-adenosyl-L-homocysteine + 4 H(+). Its function is as follows. Specifically dimethylates two adjacent adenosines (A1518 and A1519) in the loop of a conserved hairpin near the 3'-end of 16S rRNA in the 30S particle. May play a critical role in biogenesis of 30S subunits. The sequence is that of Ribosomal RNA small subunit methyltransferase A from Thiobacillus denitrificans (strain ATCC 25259 / T1).